We begin with the raw amino-acid sequence, 2450 residues long: Tetratricopeptide repeat protein 28 (2450 aa).

An N-acetylmethionine modification is found at M1. Residues 1-36 (MEQPPPLAPEPASARSRRRREPESPPAPIPLFGART) are disordered. Residue S24 is modified to Phosphoserine. TPR repeat units lie at residues 52–85 (FVEK…DPQN), 87–119 (ILYS…NPKW), 120–153 (PKAY…DPKS), 190–223 (FVVV…GTCS), 228–261 (GSVF…AKTL), 268–301 (CRAH…AMKL), 308–341 (SSAL…AKQS), 348–381 (AREL…AKDL), 388–421 (ARAY…AQEL), 428–461 (MRAY…AEDL), 468–501 (GRAS…AQEL), 508–541 (GRAY…SMEV), 548–581 (ASTH…AREL), 588–621 (ARAL…APDL), 628–661 (GKVC…AKDL), 668–701 (AKAY…AQSL), 708–741 (FRAL…SHHV), 748–781 (ASAY…YQEL), 788–821 (CRAH…GRKL), 828–861 (AQVY…LQQL), 871–904 (GRAY…AQSL), 911–944 (AKAY…AHEL), 951–984 (AQAY…ARDM), 991–1024 (SDAA…AEET), 1031–1064 (GRAY…AAQM), 1071–1104 (TVSY…AEQL), 1111–1144 (AKIR…FETI), and 1163–1196 (TSSY…AFAD). Residues 1362-1381 (SGTVSPSKDGTSSLPRRQNS) are disordered. Phosphoserine is present on residues S1584 and S2098. The disordered stretch occupies residues 2001–2364 (KPEGGLEGGG…GTLTSKRDVL (364 aa)). The segment covering 2090-2116 (SVSSKGSVSTPNSPVKMTLIPSPNSPF) has biased composition (polar residues). Residues 2124–2140 (SSDTGESDQSSTETDST) show a composition bias toward low complexity. A compositionally biased stretch (basic and acidic residues) spans 2143-2153 (SQEESTPKLDP). Polar residues predominate over residues 2191-2206 (APSSTTVFRASETSAF). S2216 is modified (phosphoserine). The segment covering 2229-2245 (ARSSSLPKVSSPATSEV) has biased composition (polar residues). 2 stretches are compositionally biased toward low complexity: residues 2252–2262 (SPPGSSHPSPG) and 2296–2320 (SPAC…SPAD). 2 positions are modified to phosphoserine: S2365 and S2370.

Interacts with AURKB. As to expression, expressed in embryos at all stages examined. In adult tissues, detected in heart and at low levels in kidney and testis.

It localises to the cytoplasm. The protein localises to the cytoskeleton. It is found in the microtubule organizing center. Its subcellular location is the centrosome. The protein resides in the spindle. It localises to the spindle pole. The protein localises to the midbody. Its function is as follows. During mitosis, may be involved in the condensation of spindle midzone microtubules, leading to the formation of midbody. Functionally, essential for the formation and integrity of the midbody. Max play a critical role in the progress of mitosis and cytokinesis during cell cycle. The sequence is that of Tetratricopeptide repeat protein 28 (Ttc28) from Mus musculus (Mouse).